The chain runs to 202 residues: Imidazoleglycerol-phosphate dehydratase (202 aa).

Belongs to the imidazoleglycerol-phosphate dehydratase family.

It localises to the cytoplasm. It catalyses the reaction D-erythro-1-(imidazol-4-yl)glycerol 3-phosphate = 3-(imidazol-4-yl)-2-oxopropyl phosphate + H2O. Its pathway is amino-acid biosynthesis; L-histidine biosynthesis; L-histidine from 5-phospho-alpha-D-ribose 1-diphosphate: step 6/9. This chain is Imidazoleglycerol-phosphate dehydratase, found in Rhizobium meliloti (strain 1021) (Ensifer meliloti).